Reading from the N-terminus, the 168-residue chain is S-ribosylhomocysteine lyase (168 aa).

Residues His54, His58, and Cys128 each contribute to the Fe cation site.

This sequence belongs to the LuxS family. In terms of assembly, homodimer. Fe cation is required as a cofactor.

It catalyses the reaction S-(5-deoxy-D-ribos-5-yl)-L-homocysteine = (S)-4,5-dihydroxypentane-2,3-dione + L-homocysteine. Its function is as follows. Involved in the synthesis of autoinducer 2 (AI-2) which is secreted by bacteria and is used to communicate both the cell density and the metabolic potential of the environment. The regulation of gene expression in response to changes in cell density is called quorum sensing. Catalyzes the transformation of S-ribosylhomocysteine (RHC) to homocysteine (HC) and 4,5-dihydroxy-2,3-pentadione (DPD). The protein is S-ribosylhomocysteine lyase of Neisseria meningitidis serogroup C (strain 053442).